Consider the following 119-residue polypeptide: Flagellar transcriptional regulator FlhD (119 aa).

Belongs to the FlhD family. As to quaternary structure, homodimer; disulfide-linked. Forms a heterohexamer composed of two FlhC and four FlhD subunits. Each FlhC binds a FlhD dimer, forming a heterotrimer, and a hexamer assembles by dimerization of two heterotrimers.

The protein resides in the cytoplasm. Functions in complex with FlhC as a master transcriptional regulator that regulates transcription of several flagellar and non-flagellar operons by binding to their promoter region. Activates expression of class 2 flagellar genes, including fliA, which is a flagellum-specific sigma factor that turns on the class 3 genes. Also regulates genes whose products function in a variety of physiological pathways. The polypeptide is Flagellar transcriptional regulator FlhD (Enterobacter sp. (strain 638)).